Consider the following 271-residue polypeptide: Shikimate dehydrogenase (NADP(+)) (271 aa).

Residues 14 to 16 (SLS) and Thr-61 contribute to the shikimate site. Residue Lys-65 is the Proton acceptor of the active site. 2 residues coordinate shikimate: Asn-86 and Asp-101. NADP(+) contacts are provided by residues 125-129 (GAGGA) and Ile-212. A shikimate-binding site is contributed by Tyr-214. Gly-235 serves as a coordination point for NADP(+).

Belongs to the shikimate dehydrogenase family. In terms of assembly, homodimer.

The catalysed reaction is shikimate + NADP(+) = 3-dehydroshikimate + NADPH + H(+). It participates in metabolic intermediate biosynthesis; chorismate biosynthesis; chorismate from D-erythrose 4-phosphate and phosphoenolpyruvate: step 4/7. In terms of biological role, involved in the biosynthesis of the chorismate, which leads to the biosynthesis of aromatic amino acids. Catalyzes the reversible NADPH linked reduction of 3-dehydroshikimate (DHSA) to yield shikimate (SA). The protein is Shikimate dehydrogenase (NADP(+)) of Clostridium perfringens (strain SM101 / Type A).